The chain runs to 289 residues: Shikimate dehydrogenase (NADP(+)) (289 aa).

Shikimate-binding positions include 22–24 and T69; that span reads SRS. The active-site Proton acceptor is the K73. E85 serves as a coordination point for NADP(+). N94 and D109 together coordinate shikimate. Residues 134 to 138, 158 to 163, and I226 each bind NADP(+); these read GAGGA and NRTLSR. Y228 is a binding site for shikimate. Residue G249 participates in NADP(+) binding.

The protein belongs to the shikimate dehydrogenase family. Homodimer.

It carries out the reaction shikimate + NADP(+) = 3-dehydroshikimate + NADPH + H(+). It functions in the pathway metabolic intermediate biosynthesis; chorismate biosynthesis; chorismate from D-erythrose 4-phosphate and phosphoenolpyruvate: step 4/7. Involved in the biosynthesis of the chorismate, which leads to the biosynthesis of aromatic amino acids. Catalyzes the reversible NADPH linked reduction of 3-dehydroshikimate (DHSA) to yield shikimate (SA). In Brucella abortus (strain S19), this protein is Shikimate dehydrogenase (NADP(+)).